Here is a 947-residue protein sequence, read N- to C-terminus: Serine-aspartate repeat-containing protein C (947 aa).

The first 50 residues, 1-50 (MNNKKTATNRKGMIPNRLNKFSIRKYSVGTASILVGTTLIFGLSGHEAKA), serve as a signal peptide directing secretion. Residues 51-164 (AEHTNGELNQ…STTPKTTTIK (114 aa)) are disordered. Positions 51–495 (AEHTNGELNQ…GSSTANGDQK (445 aa)) are ligand binding A region. Polar residues predominate over residues 56–71 (GELNQSKNETTAPSEN). Basic and acidic residues predominate over residues 72 to 83 (KTTKKVDSRQLK). Polar residues predominate over residues 84–155 (DNTQTATADQ…SNLTQAKDVS (72 aa)). 2 CNA-B domains span residues 496–606 (KYNL…YKTP) and 607–717 (KYSL…EEET). The interval 678–927 (TQTGTNTTED…NNSNNGTLFG (250 aa)) is disordered. Acidic residues-rich tracts occupy residues 685-695 (TEDDKDADGGE) and 712-886 (YYEE…DSDS). Residues 910–914 (LPETG) carry the LPXTG sorting signal motif. A compositionally biased stretch (low complexity) spans 912-927 (ETGSENNNSNNGTLFG). A Pentaglycyl murein peptidoglycan amidated threonine modification is found at Thr-913. Residues 914-947 (GSENNNSNNGTLFGGLFAALGSLLLFGRRKKQNK) constitute a propeptide, removed by sortase.

The protein belongs to the serine-aspartate repeat-containing protein (SDr) family. In terms of assembly, homodimerizes; via N2-Domain. Interacts with host NRXN1; this interaction mediates bacterial attachment to host cells.

Its subcellular location is the secreted. The protein localises to the cell wall. Functionally, cell surface-associated calcium-binding protein which plays an important role in adhesion and pathogenesis. Mediates interactions with components of the extracellular matrix such as host NRXN1 to promote bacterial adhesion. The sequence is that of Serine-aspartate repeat-containing protein C (sdrC) from Staphylococcus aureus (strain COL).